The chain runs to 398 residues: Secreted aspartic protease 2 (398 aa).

A signal peptide spans 1–18 (MFLKNIFIALAIALLVDA). Residues 19–56 (TPTTTKRSAGFVALDFSVVKTPKAFPVTNGQEGKTSKR) constitute a propeptide, activation peptide. The Peptidase A1 domain maps to 70–384 (YAADITVGSN…DLDDNEISLA (315 aa)). The active site involves aspartate 88. A pepstatin A-binding site is contributed by 88-90 (DTG). A disulfide bond links cysteine 103 and cysteine 115. 141–142 (GD) is a pepstatin A binding site. Residues aspartate 247 and aspartate 270 each coordinate Zn(2+). Residue aspartate 274 is part of the active site. Residue 274 to 278 (DSGTT) coordinates pepstatin A. Cysteines 312 and 350 form a disulfide. N-linked (GlcNAc...) asparagine glycans are attached at residues asparagine 313 and asparagine 321.

The protein belongs to the peptidase A1 family. In terms of assembly, monomer.

Its subcellular location is the secreted. The enzyme catalyses Preferential cleavage at the carboxyl of hydrophobic amino acids, but fails to cleave 15-Leu-|-Tyr-16, 16-Tyr-|-Leu-17 and 24-Phe-|-Phe-25 of insulin B chain. Activates trypsinogen, and degrades keratin.. Functionally, secreted aspartic peptidases (SAPs) are a group of ten acidic hydrolases considered as key virulence factors. These enzymes supply the fungus with nutrient amino acids as well as are able to degrade the selected host's proteins involved in the immune defense. Induces host inflammatory cytokine production in a proteolytic activity-independent way. Plays a role in tissue damage during superficial infection. Moreover, acts toward human hemoglobin though limited proteolysis to generate a variety of antimicrobial hemocidins, enabling to compete with the other microorganisms of the same physiological niche using the microbicidal peptides generated from the host protein. Its function is as follows. Plays a key role in defense against host by cleaving histatin-5 (Hst 5), a peptide from human saliva that carries out fungicidal activity. The cleavage rate decreases in an order of SAP2 &gt; SAP9 &gt; SAP3 &gt; SAP7 &gt; SAP4 &gt; SAP1 &gt; SAP8. The first cleavage occurs between residues 'Lys-17' and 'His-18' of Hst 5, giving DSHAKRHHGYKRKFHEK and HHSHRGY peptides. Simultaneously, the DSHAKRHHGYKRK peptide is also formed. Further fragmentation by SAP2 results in FHEK and DSHAKRHHGY products. The polypeptide is Secreted aspartic protease 2 (Candida albicans (Yeast)).